Consider the following 593-residue polypeptide: MVKRHKNTIGVWRLGKTLGTGSTSCVRLAKHAKTGDLAAIKIIPIRYASIGMEILMMRLLRHPNILRLYDVWTDHQHMYLALEYVPDGELFHYIRKHGPLSEREAAHYLSQILDAVAHCHRFRFRHRDLKLENILIKVNEQQIKIADFGMATVEPNDSCLENYCGSLHYLAPEIVSHKPYRGAPADVWSCGVILYSLLSNKLPFGGQNTDVIYNKIRHGAYDLPSSISSAAQDLLHRMLDVNPSTRITIPEVFSHPFLMGCTSLSSMDSTTPPTPSLSIDEIDPLVVDCMCVLWKKSSSKKVVRRLQQRDDNDEKYVYKVLSEILRDDMLKKQRFDENKYLSLYDLIHDNNLFTKASISTTSLVKSNVSTNSRKSSNFEDELARRVSSPLSALNQMSQSPIPIRVSSDKDYDSYACHEVVSNPSTLDDDYNYMFVCPPEEYTYSTDNVRTDSLDLQSLPTPTLEQLESVPFNRYGYVRIFPSTTLSSTASGYYTPDSLSTPEPSIDGLTNLDDVQVGGFVQGSGNQNRRPISFPVISNMQPNITNVRSASAPLCSSPVPSRRYSQYATNARYTPRKVSSGSVLRKISSFFRKD.

One can recognise a Protein kinase domain in the interval 12-258 (WRLGKTLGTG…IPEVFSHPFL (247 aa)). ATP-binding positions include 18-26 (LGTGSTSCV) and Lys-41. The Proton acceptor role is filled by Asp-128. Phosphoserine is present on Ser-550.

It belongs to the protein kinase superfamily. CAMK Ser/Thr protein kinase family. NIM1 subfamily. As to quaternary structure, interacts with msp1.

The enzyme catalyses L-seryl-[protein] + ATP = O-phospho-L-seryl-[protein] + ADP + H(+). It catalyses the reaction L-threonyl-[protein] + ATP = O-phospho-L-threonyl-[protein] + ADP + H(+). In terms of biological role, this protein, a dose-dependent mitotic inducer, appears to function as a negative regulator of mitosis inhibitor wee1 by phosphorylating and inactivating it. The polypeptide is Mitosis inducer protein kinase cdr1 (cdr1) (Schizosaccharomyces pombe (strain 972 / ATCC 24843) (Fission yeast)).